Consider the following 668-residue polypeptide: tRNA 5-methylaminomethyl-2-thiouridine biosynthesis bifunctional protein MnmC (668 aa).

Positions 1–245 are tRNA (mnm(5)s(2)U34)-methyltransferase; sequence MKHYSIQPAN…KREMLCGVME (245 aa). Positions 270–668 are FAD-dependent cmnm(5)s(2)U34 oxidoreductase; it reads IGGGIASALL…LLKGKAVKAG (399 aa).

This sequence in the N-terminal section; belongs to the methyltransferase superfamily. tRNA (mnm(5)s(2)U34)-methyltransferase family. In the C-terminal section; belongs to the DAO family. It depends on FAD as a cofactor.

It localises to the cytoplasm. The enzyme catalyses 5-aminomethyl-2-thiouridine(34) in tRNA + S-adenosyl-L-methionine = 5-methylaminomethyl-2-thiouridine(34) in tRNA + S-adenosyl-L-homocysteine + H(+). In terms of biological role, catalyzes the last two steps in the biosynthesis of 5-methylaminomethyl-2-thiouridine (mnm(5)s(2)U) at the wobble position (U34) in tRNA. Catalyzes the FAD-dependent demodification of cmnm(5)s(2)U34 to nm(5)s(2)U34, followed by the transfer of a methyl group from S-adenosyl-L-methionine to nm(5)s(2)U34, to form mnm(5)s(2)U34. This Escherichia coli (strain K12 / DH10B) protein is tRNA 5-methylaminomethyl-2-thiouridine biosynthesis bifunctional protein MnmC.